The following is a 289-amino-acid chain: Early E1A protein (289 aa).

Residues 41 to 49 form an interaction with RB1 in competition with E2F1 region; the sequence is PTLHELYDL. Positions 76–140 are interaction with UBE2I; sequence EGIDLLTFPP…PSDDEDEEGE (65 aa). The interval 82–107 is disordered; that stretch reads TFPPAPGSPEPPHLSRQPEQPEQRAL. Pro residues predominate over residues 84–93; the sequence is PPAPGSPEPP. Ser-89 carries the post-translational modification Phosphoserine; by host. Positions 113–117 match the PXLXP motif, interaction with host ZMYND11 motif; it reads PNLVP. Residues 122 to 126 carry the LXCXE motif, interaction with host RB1 and TMEM173/STING motif; it reads LTCHE. Residues 154–174 fold into a zinc finger; the sequence is CRSCHYHRRNTGDPDIMCSLC. Positions 187–245 are disordered; the sequence is VSEPEPEPEPEPEPARPTRRPKLVPAILRRPTSPVSRECNSSTDSCDSGPSNTPPEIHP. A phosphoserine; by host mark is found at Ser-219 and Ser-231. Positions 219–237 are enriched in polar residues; it reads SPVSRECNSSTDSCDSGPS. Positions 258–289 match the Bipartite nuclear localization signal motif; that stretch reads RVGGRRQAVECIEDLLNESGQPLDLSCKRPRP. The PXDLS motif, CTBP-binding signature appears at 279-283; that stretch reads PLDLS.

Belongs to the adenoviridae E1A protein family. In terms of assembly, interacts with host UBE2I; this interaction interferes with polySUMOylation. Interacts with host RB1; this interaction induces the aberrant dissociation of RB1-E2F1 complex thereby disrupting the activity of RB1 and activating E2F1-regulated genes. Interacts with host ATF7; the interaction enhances ATF7-mediated viral transactivation activity which requires the zinc binding domains of both proteins. Isoform early E1A 32 kDa protein and isoform early E1A 26 kDa protein interact (via N-terminus) with CUL1 and E3 ubiquitin ligase RBX1; these interactions inhibit RBX1-CUL1-dependent elongation reaction of ubiquitin chains and attenuate ubiquitination of SCF(FBXW7) target proteins. Interacts (via PXLXP motif) with host ZMYND11/BS69 (via MYND-type zinc finger); this interaction inhibits E1A mediated transactivation. Interacts with host EP300; this interaction stimulates the acetylation of RB1 by recruiting EP300 and RB1 into a multimeric-protein complex. Interacts with host CTBP1 and CTBP2; this interaction seems to potentiate viral replication. Interacts with host DCAF7. Interacts with host DYRK1A. Interacts with host KPNA4; this interaction allows E1A import into the host nucleus. Interacts with host EP400; this interaction stabilizes MYC. Interacts (via LXCXE motif) with host TMEM173/STING; this interaction impairs the ability of TMEM173/STING to sense cytosolic DNA and promote the production of type I interferon (IFN-alpha and IFN-beta). Interacts (via C-terminus) with host ZBED1/hDREF (via C-terminus); the interaction is direct.

The protein resides in the host nucleus. In terms of biological role, plays a role in viral genome replication by driving entry of quiescent cells into the cell cycle. Stimulation of progression from G1 to S phase allows the virus to efficiently use the cellular DNA replicating machinery to achieve viral genome replication. E1A protein has both transforming and trans-activating activities. Induces the disassembly of the E2F1 transcription factor from RB1 by direct competition for the same binding site on RB1, with subsequent transcriptional activation of E2F1-regulated S-phase genes and of the E2 region of the adenoviral genome. Release of E2F1 leads to the ARF-mediated inhibition of MDM2 and causes TP53/p53 to accumulate because it is not targeted for degradation by MDM2-mediated ubiquitination anymore. This increase in TP53, in turn, would arrest the cell proliferation and direct its death but this effect is counteracted by the viral protein E1B-55K. Inactivation of the ability of RB1 to arrest the cell cycle is critical for cellular transformation, uncontrolled cellular growth and proliferation induced by viral infection. Interaction with RBX1 and CUL1 inhibits ubiquitination of the proteins targeted by SCF(FBXW7) ubiquitin ligase complex, and may be linked to unregulated host cell proliferation. The tumorigenesis-restraining activity of E1A may be related to the disruption of the host CtBP-CtIP complex through the CtBP binding motif. Interacts with host TBP protein; this interaction probably disrupts the TBP-TATA complex. Interaction with host TMEM173/STING impairs the ability of TMEM173/STING to sense cytosolic DNA and promote the production of type I interferon (IFN-alpha and IFN-beta). Promotes the sumoylation of host ZBED1/hDREF with SUMO1. In Homo sapiens (Human), this protein is Early E1A protein.